The chain runs to 245 residues: 1-(5-phosphoribosyl)-5-[(5-phosphoribosylamino)methylideneamino] imidazole-4-carboxamide isomerase (245 aa).

Asp7 (proton acceptor) is an active-site residue. The active-site Proton donor is Asp129.

It belongs to the HisA/HisF family.

It localises to the cytoplasm. The enzyme catalyses 1-(5-phospho-beta-D-ribosyl)-5-[(5-phospho-beta-D-ribosylamino)methylideneamino]imidazole-4-carboxamide = 5-[(5-phospho-1-deoxy-D-ribulos-1-ylimino)methylamino]-1-(5-phospho-beta-D-ribosyl)imidazole-4-carboxamide. It functions in the pathway amino-acid biosynthesis; L-histidine biosynthesis; L-histidine from 5-phospho-alpha-D-ribose 1-diphosphate: step 4/9. In Shigella boydii serotype 18 (strain CDC 3083-94 / BS512), this protein is 1-(5-phosphoribosyl)-5-[(5-phosphoribosylamino)methylideneamino] imidazole-4-carboxamide isomerase.